A 374-amino-acid polypeptide reads, in one-letter code: Diels-Alderase fsa2 (374 aa).

Positions 1 to 216 (MSNVTVSAFT…MDRVWSPLSW (216 aa)) are beta-sandwich motif. The tract at residues 216–374 (WPQVMTESYY…VGTGGQCELS (159 aa)) is beta-barrel motif.

Belongs to the Diels-Alderase family.

The catalysed reaction is (5S)-3-[(2E,6R,8E,10E,12E)-2,6-dimethyltetradeca-2,8,10,12-tetraenoyl]-5-(hydroxymethyl)pyrrolidine-2,4-dione = trichosetin. The protein operates within mycotoxin biosynthesis. In terms of biological role, diels-Alderase; part of the gene cluster that mediates the biosynthesis of the HIV-1 integrase inhibitor equisetin and of fusarisetin A, both trans-fused decalin-containing tetramic acids showing also antimicrobial activity. The PKS module of fsa1 together with the enoylreductase fsa3 catalyze the formation of the polyketide unit which is then conjugated to L-serine by the condensation domain of the fsa1 NRPS module. Activity of the Dieckmann cyclase domain (RED) results in release of the Dieckmann product intermediate. Diels-Alderase fsa2 is involved in endo-selective Diels-Alder cycloaddition to form the decalin ring, leading to the production of N-desmethylequisetin also called trichosetin. Subsequent N-methylation is carried out by fsa4 to give equisetin. The enzymatic gene responsible for the conversion of equisetin to fusarisetin A has not been identified yet and is probably located outside of the fsa cluster. This chain is Diels-Alderase fsa2, found in Fusarium sp. (strain FN080326).